Here is a 509-residue protein sequence, read N- to C-terminus: Maturase K (509 aa).

This sequence belongs to the intron maturase 2 family. MatK subfamily.

It is found in the plastid. The protein resides in the chloroplast. Its function is as follows. Usually encoded in the trnK tRNA gene intron. Probably assists in splicing its own and other chloroplast group II introns. In Otacanthus azureus (Brazilian snapdragon), this protein is Maturase K.